The chain runs to 895 residues: Clathrin interactor EPSIN 2 (895 aa).

One can recognise an ENTH domain in the interval lysine 18–arginine 150. Basic and acidic residues-rich tracts occupy residues arginine 150 to arginine 161, aspartate 177 to serine 236, and arginine 245 to serine 257. The tract at residues arginine 150–threonine 396 is disordered. A phosphoserine mark is found at serine 270 and serine 282. Low complexity predominate over residues alanine 329–threonine 348. 2 stretches are compositionally biased toward polar residues: residues phenylalanine 349–valine 358 and proline 387–threonine 396. The Clathrin binding signature appears at leucine 409–phenylalanine 413. Disordered stretches follow at residues alanine 436–glutamine 533 and lysine 758–glycine 784. Low complexity predominate over residues proline 440 to aspartate 454. The ALPHA-ADR binding motif lies at aspartate 454–phenylalanine 456. 3 stretches are compositionally biased toward polar residues: residues phenylalanine 464–alanine 479, proline 515–glutamine 533, and glutamine 759–asparagine 769.

Belongs to the epsin family. As to quaternary structure, interacts with clathrin, VTI12, DELTA-ADR and ALPHA-ADR.

The protein localises to the golgi apparatus. Its subcellular location is the cytoplasmic vesicle. It localises to the clathrin-coated vesicle. In terms of biological role, may have a role in transport via clathrin-coated vesicles from the trans-Golgi network to endosomes. Stimulates clathrin assembly. Binds to membranes enriched in phosphatidylinositol 3-phosphate (PtdIns(3)P). Plays an important role in protein trafficking. In Arabidopsis thaliana (Mouse-ear cress), this protein is Clathrin interactor EPSIN 2 (EPSIN2).